A 246-amino-acid chain; its full sequence is Probable cytokinin riboside 5'-monophosphate phosphoribohydrolase LOGL5 (246 aa).

The segment covering 1 to 10 has biased composition (basic and acidic residues); it reads MMMENSREQQ. Positions 1 to 28 are disordered; the sequence is MMMENSREQQPESSPANNNSKKKKKKKT. Residues E103, 121–122, 138–144, and T150 each bind substrate; these read RK and GYGTLEE.

It belongs to the LOG family. In terms of tissue distribution, expressed in roots and leaves.

It catalyses the reaction N(6)-(dimethylallyl)adenosine 5'-phosphate + H2O = N(6)-dimethylallyladenine + D-ribose 5-phosphate. The catalysed reaction is 9-ribosyl-trans-zeatin 5'-phosphate + H2O = trans-zeatin + D-ribose 5-phosphate. Cytokinin-activating enzyme working in the direct activation pathway. Phosphoribohydrolase that converts inactive cytokinin nucleotides to the biologically active free-base forms. This chain is Probable cytokinin riboside 5'-monophosphate phosphoribohydrolase LOGL5 (LOGL5), found in Oryza sativa subsp. japonica (Rice).